The primary structure comprises 492 residues: Pre-mRNA-splicing factor sap61 (492 aa).

Residues 243-267 (FYCEVCQKFFGKITVFEAHKKSKAH) form a C2H2-type zinc finger. Disordered stretches follow at residues 268 to 291 (NKAV…KQKG) and 337 to 365 (AAER…QDDE). Low complexity predominate over residues 276 to 286 (SSSPSTTSNTN). The segment covering 345-354 (QSTPSVSVEG) has biased composition (polar residues). The span at 355-365 (NQDEESDQDDE) shows a compositional bias: acidic residues. S360 carries the phosphoserine modification. The segment at 397 to 428 (FPCEICGNYVYMGRKAFDKHFTEQRHIYGLKC) adopts a Matrin-type zinc-finger fold.

This sequence belongs to the SF3A3 family. Belongs to the 40S cdc5-associated complex (or cwf complex), a spliceosome sub-complex reminiscent of a late-stage spliceosome composed of the U2, U5 and U6 snRNAs and at least brr2, cdc5, cwf2/prp3, cwf3/syf1, cwf4/syf3, cwf5/ecm2, spp42/cwf6, cwf7/spf27, cwf8, cwf9, cwf10, cwf11, cwf12, prp45/cwf13, cwf14, cwf15, cwf16, cwf17, cwf18, cwf19, cwf20, cwf21, cwf22, cwf23, cwf24, cwf25, cwf26, cyp7/cwf27, cwf28, cwf29/ist3, lea1, msl1, prp5/cwf1, prp10, prp12/sap130, prp17, prp22, sap61, sap62, sap114, sap145, slu7, smb1, smd1, smd3, smf1, smg1 and syf2.

It localises to the nucleus. The protein localises to the cytoplasm. Its function is as follows. Involved in mRNA splicing where it associates with cdc5 and the other cwf proteins as part of the spliceosome. This chain is Pre-mRNA-splicing factor sap61 (sap61), found in Schizosaccharomyces pombe (strain 972 / ATCC 24843) (Fission yeast).